The chain runs to 316 residues: Beta-ketoacyl-[acyl-carrier-protein] synthase III (316 aa).

Active-site residues include Cys112 and His243. Residues 244-248 (QANIR) form an ACP-binding region. Asn273 is a catalytic residue.

Belongs to the thiolase-like superfamily. FabH family. As to quaternary structure, homodimer.

It is found in the cytoplasm. It catalyses the reaction malonyl-[ACP] + acetyl-CoA + H(+) = 3-oxobutanoyl-[ACP] + CO2 + CoA. It participates in lipid metabolism; fatty acid biosynthesis. In terms of biological role, catalyzes the condensation reaction of fatty acid synthesis by the addition to an acyl acceptor of two carbons from malonyl-ACP. Catalyzes the first condensation reaction which initiates fatty acid synthesis and may therefore play a role in governing the total rate of fatty acid production. Possesses both acetoacetyl-ACP synthase and acetyl transacylase activities. Its substrate specificity determines the biosynthesis of branched-chain and/or straight-chain of fatty acids. The protein is Beta-ketoacyl-[acyl-carrier-protein] synthase III of Haemophilus ducreyi (strain 35000HP / ATCC 700724).